Here is a 388-residue protein sequence, read N- to C-terminus: Pregnancy-associated glycoprotein (388 aa).

The first 15 residues, 1–15 (MKWFGVLGLVTLSEC), serve as a signal peptide directing secretion. In terms of domain architecture, Peptidase A1 spans 74 to 385 (YMGIISVGTP…DRENDRIGLA (312 aa)). Aspartate 92 is a catalytic residue. Disulfide bonds link cysteine 105-cysteine 110 and cysteine 266-cysteine 270. Aspartate 275 is an active-site residue. Cysteine 309 and cysteine 344 form a disulfide bridge. N-linked (GlcNAc...) asparagine glycosylation is present at asparagine 356.

This sequence belongs to the peptidase A1 family. In terms of tissue distribution, trophoblast and placental tissue.

Its subcellular location is the secreted. The protein localises to the extracellular space. The polypeptide is Pregnancy-associated glycoprotein (PAG) (Equus caballus (Horse)).